Reading from the N-terminus, the 302-residue chain is MDSLNSSYPQSAMATYSDLLDLAAQQQPHLSGLERLWWAHYAYWDNNIVATATGIITFLAHEIIYFSRCLPWIIADSLPSIFLKYKIQDQKPPPSAAEQWACTKYILLIHFVVELPLIVLFHPMMELCGLSFTIPFPDLRTLTAQIIIFFLLEDTYHYWLHRAMHWGPLYRSIHRIHHQYAAPFGLTAEYASPWETLLLGLGTIGPPLLLALMDCNVHLVTVLAWVTLRQFQAIDSHSGYDFPWSLRRILPFWGGADWHDDHHRYFWGNYSSSFRHWDVLMGTVAGPEAREKRRAEREKRQA.

N5 is a glycosylation site (N-linked (GlcNAc...) asparagine). Helical transmembrane passes span 47-67 (NIVATATGIITFLAHEIIYFS), 105-125 (YILLIHFVVELPLIVLFHPMM), and 132-152 (FTIPFPDLRTLTAQIIIFFLL). One can recognise a Fatty acid hydroxylase domain in the interval 147 to 283 (IIFFLLEDTY…FRHWDVLMGT (137 aa)). The short motif at 161–165 (HRAMH) is the Histidine box-1 element. The short motif at 174–178 (HRIHH) is the Histidine box-2 element. Residues 193–213 (PWETLLLGLGTIGPPLLLALM) form a helical membrane-spanning segment. Positions 258-264 (WHDDHHR) match the Histidine box-3 motif. The N-linked (GlcNAc...) asparagine glycan is linked to N269.

This sequence belongs to the sterol desaturase family. Fe cation serves as cofactor.

It localises to the endoplasmic reticulum membrane. It participates in steroid metabolism; ergosterol biosynthesis. Functionally, sterol-C4-methyl oxidase; part of the third module of ergosterol biosynthesis pathway that includes the late steps of the pathway. Erg25A is a catalytic component of the C-4 demethylation complex that catalyzes the conversion of 4,4-dimethylfecosterol into fecosterol via 4-methylfecosterol. The third module or late pathway involves the ergosterol synthesis itself through consecutive reactions that mainly occur in the endoplasmic reticulum (ER) membrane. Firstly, the squalene synthase erg9 catalyzes the condensation of 2 farnesyl pyrophosphate moieties to form squalene, which is the precursor of all steroids. Squalene synthase is crucial for balancing the incorporation of farnesyl diphosphate (FPP) into sterol and nonsterol isoprene synthesis. Secondly, squalene is converted into lanosterol by the consecutive action of the squalene epoxidase erg1 and the lanosterol synthase erg7. Then, the delta(24)-sterol C-methyltransferase erg6 methylates lanosterol at C-24 to produce eburicol. Eburicol is the substrate of the sterol 14-alpha demethylase encoded by cyp51A and cyp51B, to yield 4,4,24-trimethyl ergosta-8,14,24(28)-trienol. The C-14 reductase erg24 then reduces the C14=C15 double bond which leads to 4,4-dimethylfecosterol. A sequence of further demethylations at C-4, involving the C-4 demethylation complex containing the C-4 methylsterol oxidases erg25A or erg25B, the sterol-4-alpha-carboxylate 3-dehydrogenase erg26 and the 3-keto-steroid reductase erg27, leads to the production of fecosterol via 4-methylfecosterol. The C-8 sterol isomerase erg2 then catalyzes the reaction which results in unsaturation at C-7 in the B ring of sterols and thus converts fecosterol to episterol. The sterol-C5-desaturase erg3B then catalyzes the introduction of a C-5 double bond in the B ring to produce 5-dehydroepisterol. The 2 other sterol-C5-desaturases, erg3A and erg3C, seem to be less important in ergosterol biosynthesis. The C-22 sterol desaturase erg5 further converts 5-dehydroepisterol into ergosta-5,7,22,24(28)-tetraen-3beta-ol by forming the C-22(23) double bond in the sterol side chain. Finally, ergosta-5,7,22,24(28)-tetraen-3beta-ol is substrate of the C-24(28) sterol reductases erg4A and erg4B to produce ergosterol. Possible alternative sterol biosynthetic pathways might exist from fecosterol to ergosterol, depending on the activities of the erg3 isoforms. In Aspergillus fumigatus (strain ATCC MYA-4609 / CBS 101355 / FGSC A1100 / Af293) (Neosartorya fumigata), this protein is Methylsterol monooxygenase erg25A.